A 613-amino-acid polypeptide reads, in one-letter code: WD40 repeat-containing protein HOS15 (613 aa).

A LisH domain is found at 5-37 (TSVELNFLVFRYLQESGFTHAAFTLGYEAGINK). Disordered stretches follow at residues 101 to 174 (KKRK…REKM) and 193 to 214 (EIEREREREKIEREKSHEKQLG). 8 WD repeats span residues 263-302 (GHTSEVCACAWSPSASLLASGSGDATARIWSIPEGSFKAV), 322-362 (EKSK…STLS), 363-402 (KHKGPIFSLKWNKKGDYLLTGSVDRTAVVWDVKAEEWKQQ), 405-443 (FHSGPTLDVDWRNNVSFATSSTDSMIYLCKIGETRPAKT), 446-485 (GHQGEVNCVKWDPTGSLLASCSDDSTAKIWNIKQSTFVHD), 488-536 (EHTK…MLCS), 539-580 (GHRE…KTYT), and 582-613 (NGGIFEVCWNKEGNKIAACFADNSVCVLDFRM).

It is found in the nucleus. In terms of biological role, acts as a repressor of cold stress-regulated gene expression. Interacts specifically with and promotes deacetylation of histone H4. Plays a role in gene regulation for plant acclimation and tolerance to cold stress. This Arabidopsis thaliana (Mouse-ear cress) protein is WD40 repeat-containing protein HOS15.